Reading from the N-terminus, the 313-residue chain is Ribosomal RNA small subunit methyltransferase H (313 aa).

S-adenosyl-L-methionine contacts are provided by residues 33–35 (AGH), D53, F82, D103, and Q110.

The protein belongs to the methyltransferase superfamily. RsmH family.

It is found in the cytoplasm. The catalysed reaction is cytidine(1402) in 16S rRNA + S-adenosyl-L-methionine = N(4)-methylcytidine(1402) in 16S rRNA + S-adenosyl-L-homocysteine + H(+). Specifically methylates the N4 position of cytidine in position 1402 (C1402) of 16S rRNA. The protein is Ribosomal RNA small subunit methyltransferase H of Acetivibrio thermocellus (strain ATCC 27405 / DSM 1237 / JCM 9322 / NBRC 103400 / NCIMB 10682 / NRRL B-4536 / VPI 7372) (Clostridium thermocellum).